The primary structure comprises 669 residues: DNA mismatch repair protein MutL (669 aa).

2 disordered regions span residues 354-402 (NRPA…ENPY) and 448-479 (TVSH…PLES). The segment covering 448–468 (TVSHDSPPNRTAPDATTSSSK) has biased composition (polar residues).

Belongs to the DNA mismatch repair MutL/HexB family.

Its function is as follows. This protein is involved in the repair of mismatches in DNA. It is required for dam-dependent methyl-directed DNA mismatch repair. May act as a 'molecular matchmaker', a protein that promotes the formation of a stable complex between two or more DNA-binding proteins in an ATP-dependent manner without itself being part of a final effector complex. The protein is DNA mismatch repair protein MutL of Pectobacterium carotovorum subsp. carotovorum (strain PC1).